Consider the following 379-residue polypeptide: Sulfate adenylyltransferase (379 aa).

It belongs to the sulfate adenylyltransferase family.

The enzyme catalyses sulfate + ATP + H(+) = adenosine 5'-phosphosulfate + diphosphate. It participates in sulfur metabolism; hydrogen sulfide biosynthesis; sulfite from sulfate: step 1/3. In Thermococcus onnurineus (strain NA1), this protein is Sulfate adenylyltransferase.